Reading from the N-terminus, the 426-residue chain is Protein FAM124B (426 aa).

This sequence belongs to the FAM124 family.

It is found in the nucleus. The polypeptide is Protein FAM124B (fam124b) (Xenopus tropicalis (Western clawed frog)).